A 213-amino-acid polypeptide reads, in one-letter code: Immunoglobulin lambda-like polypeptide 1 (213 aa).

A signal peptide spans 1-37; the sequence is MRPGTGQGGLEAPGEPGPNLRQRWPLLLLGLAVVTHG. The j region stretch occupies residues 97 to 108; it reads VFGSGTQLTVLS. Residues 109–213 are c region; the sequence is QPKATPSVTL…EKTVAPAECS (105 aa). An Ig-like C1-type domain is found at 114 to 208; sequence PSVTLFPPSS…EGSTVEKTVA (95 aa). C135 and C194 form a disulfide bridge.

Associates non-covalently with VPREB1. Interacts with SYNV1/HRD1 (via N-terminus); this interaction leads to increased IGLL1 ubiquitination and degradation in pre-B cells, possibly through a lysosomal, not proteasomal, pathway. Expressed only in pre-B-cells and a special B-cell line (which is surface Ig negative).

The protein localises to the endoplasmic reticulum. It localises to the secreted. In terms of biological role, critical for B-cell development. The polypeptide is Immunoglobulin lambda-like polypeptide 1 (IGLL1) (Homo sapiens (Human)).